A 164-amino-acid chain; its full sequence is V-type proton ATPase 16 kDa proteolipid subunit (164 aa).

The Lumenal segment spans residues 1–10 (MSDLCPPTAP). The chain crosses the membrane as a helical span at residues 11-31 (FFGFMGAAVALIFANLGAAYG). Residues 32 to 53 (TAKSGVGVSSMGVMKPDLVMKS) are Cytoplasmic-facing. The helical transmembrane segment at 54–74 (IIPVVMAGVLGIYGLIIAVII) threads the bilayer. Residues 75 to 96 (GNGVKGPEGGKPQYSSFTGFAH) lie on the Lumenal side of the membrane. Residues 97-118 (LAAGLACGLSGMAAGIAIGIVG) traverse the membrane as a helical segment. Topologically, residues 119 to 130 (DAGVRASAQQAK) are cytoplasmic. The helical transmembrane segment at 131 to 155 (LYVGMVLILIFAEALGLYGLIVGLI) threads the bilayer. At 156-164 (LTSKEAPCS) the chain is on the lumenal side.

The protein belongs to the V-ATPase proteolipid subunit family. V-ATPase is a heteromultimeric enzyme composed of a peripheral catalytic V1 complex (main components: subunits A, B, C, D, E, and F) attached to an integral membrane V0 proton pore complex (main component: the proteolipid protein; which is present as a hexamer that forms the proton-conducting pore).

The protein localises to the vacuole membrane. Its function is as follows. Proton-conducting pore forming subunit of the membrane integral V0 complex of vacuolar ATPase. V-ATPase is responsible for acidifying a variety of intracellular compartments in eukaryotic cells. The polypeptide is V-type proton ATPase 16 kDa proteolipid subunit (VAP) (Chrysotila carterae (Marine alga)).